A 186-amino-acid chain; its full sequence is TATA-box-binding protein (186 aa).

2 repeat units span residues 10-86 (IENV…FDKL) and 101-179 (VQNI…VERL).

It belongs to the TBP family.

Its function is as follows. General factor that plays a role in the activation of archaeal genes transcribed by RNA polymerase. Binds specifically to the TATA box promoter element which lies close to the position of transcription initiation. The sequence is that of TATA-box-binding protein from Haloarcula marismortui (strain ATCC 43049 / DSM 3752 / JCM 8966 / VKM B-1809) (Halobacterium marismortui).